A 264-amino-acid polypeptide reads, in one-letter code: tRNA pseudouridine synthase A (264 aa).

The Nucleophile role is filled by D51. Y109 provides a ligand contact to substrate.

The protein belongs to the tRNA pseudouridine synthase TruA family. Homodimer.

The catalysed reaction is uridine(38/39/40) in tRNA = pseudouridine(38/39/40) in tRNA. Functionally, formation of pseudouridine at positions 38, 39 and 40 in the anticodon stem and loop of transfer RNAs. This chain is tRNA pseudouridine synthase A, found in Staphylococcus aureus (strain MRSA252).